The primary structure comprises 1309 residues: Nuclear pore complex protein NUP1 (1309 aa).

Disordered regions lie at residues 1–58, 83–118, 173–210, 266–296, 329–348, 384–417, 467–538, 594–617, and 635–680; these read MASA…GGGW, RKRL…HKED, AADS…GSMN, RTPF…VTPR, SKWE…SGLK, ESPL…NLVP, LGNL…EEHP, SEAM…NGSL, and SNMA…VFPN. Residues 2–677 form a 25 X 2 AA repeats of F-G region; sequence ASAARGESSN…LEEPKKPAAV (676 aa). Basic residues predominate over residues 22–32; sequence KFRKPTARRSQ. Gly residues predominate over residues 47–58; the sequence is GLGGGDVRGGGW. Residues 91 to 101 are compositionally biased toward polar residues; it reads TPLQSPEQQKQ. Over residues 195–204 the composition is skewed to basic and acidic residues; that stretch reads PSHERDRTHP. The span at 268 to 283 shows a compositional bias: polar residues; it reads PFPQKSPTMSLVTKPS. Basic and acidic residues predominate over residues 396–405; sequence KTTHTSKDSA. 2 stretches are compositionally biased toward polar residues: residues 597 to 617 and 635 to 659; these read MPST…NGSL and SNMA…SGKP. Over residues 660 to 673 the composition is skewed to basic and acidic residues; that stretch reads TSEEKRIPLEEPKK. Residues 711–712 form repeat 1; it reads FG. Residues 719–865 are disordered; sequence KPTESKKTFS…VKNATFGNTS (147 aa). 2 stretches are compositionally biased toward low complexity: residues 728-741 and 767-783; these read SNSA…TSAA and SSPS…SDNS. The segment covering 789 to 803 has biased composition (polar residues); the sequence is STVQSFAATHNSSSI. Residues 804-805 form repeat 2; the sequence is FG. The segment covering 809 to 827 has biased composition (low complexity); the sequence is TSNDSNSQSTSASPLSSTS. Repeat copies occupy residues 831–832, 861–862, 869–870, 883–884, 898–899, 927–928, 956–957, 983–984, 1004–1005, 1029–1030, 1038–1039, and 1053–1054. Over residues 1004–1023 the composition is skewed to low complexity; it reads FGAGNAQTGNTGSGTTTSTQ. The segment at 1004 to 1028 is disordered; it reads FGAGNAQTGNTGSGTTTSTQSIPFQ. Residues 1068 to 1086 are compositionally biased toward low complexity; that stretch reads TPQLSSTNSSASSSSTMSS. The tract at residues 1068–1105 is disordered; sequence TPQLSSTNSSASSSSTMSSPLFGTSWQAPNSSPNSGPV. Copy 15 of the repeat occupies 1089-1090; the sequence is FG. The span at 1096 to 1105 shows a compositional bias: low complexity; it reads PNSSPNSGPV. A run of 10 repeats spans residues 1121–1122, 1137–1138, 1151–1152, 1153–1154, 1166–1167, 1177–1178, 1186–1187, 1224–1225, 1238–1239, and 1255–1256. The disordered stretch occupies residues 1278-1309; sequence FQGGGSFSLGSTGGGDKSGRRIFKAKKSTRKK. Over residues 1279-1293 the composition is skewed to gly residues; the sequence is QGGGSFSLGSTGGGD. Over residues 1297–1309 the composition is skewed to basic residues; the sequence is RRIFKAKKSTRKK.

As to quaternary structure, part of the nuclear pore complex (NPC). The NPC has an eight-fold symmetrical structure comprising a central transport channel and two rings, the cytoplasmic and nuclear rings, to which eight filaments are attached. The cytoplasmic filaments have loose ends, while the nuclear filaments are joined in a distal ring, forming a nuclear basket. NPCs are highly dynamic in configuration and composition, and can be devided in 3 subcomplexes, the NUP62 subcomplex, the NUP107-160 subcomplex and the NUP93 subcomplex, containing approximately 30 different nucleoporin proteins. Interacts with EER5, anchoring the TREX-2 complex on the nuclear pore complex. Interacts with UCH1 and UCH2.

It localises to the nucleus envelope. The protein resides in the nucleus. It is found in the nuclear pore complex. The protein localises to the cytoplasm. Its subcellular location is the cytosol. In terms of biological role, nucleoporin required for nuclear mRNA export. Functions as an adapter and/or regulator molecule in the periphery of the nuclear pore complex (NPC). May interact with importin proteins and mediate active nucleocytoplasmic transport through the NPC. Involved in regulation of nuclear morphology. This Arabidopsis thaliana (Mouse-ear cress) protein is Nuclear pore complex protein NUP1.